The sequence spans 190 residues: Vexin (190 aa).

A disordered region spans residues 88–156; it reads AEKKASRFSR…DEATLPLTAH (69 aa). Residues 117-133 show a composition bias toward polar residues; it reads TDKQNAPTVPASPSSYE. Basic and acidic residues predominate over residues 136-149; it reads GCREQRPENPKDEA.

Belongs to the vexin family. In terms of tissue distribution, expressed in differentiating progenitors in the developing central nervous system (CNS).

Its subcellular location is the cell membrane. It localises to the nucleus. Required for neurogenesis in the neural plate and retina. Cooperates with cell cycle inhibitor cdknx/p27(xic1) to enhance neurogenesis and increase the levels of the neuronal determination factor neurog2/X-ngngr-1. The chain is Vexin from Xenopus laevis (African clawed frog).